The primary structure comprises 365 residues: Cobalt-precorrin-5B C(1)-methyltransferase (365 aa).

This sequence belongs to the CbiD family.

It carries out the reaction Co-precorrin-5B + S-adenosyl-L-methionine = Co-precorrin-6A + S-adenosyl-L-homocysteine. It functions in the pathway cofactor biosynthesis; adenosylcobalamin biosynthesis; cob(II)yrinate a,c-diamide from sirohydrochlorin (anaerobic route): step 6/10. Functionally, catalyzes the methylation of C-1 in cobalt-precorrin-5B to form cobalt-precorrin-6A. The protein is Cobalt-precorrin-5B C(1)-methyltransferase of Pseudomonas fluorescens (strain ATCC BAA-477 / NRRL B-23932 / Pf-5).